A 149-amino-acid polypeptide reads, in one-letter code: Large ribosomal subunit protein eL19 (149 aa).

Residues 45–94 form a disordered region; sequence VADGTIDAEDTQGNSRGRARERDAKESYGHKKGAGSRKGKAGARQNEKRE. Residues 62-73 are compositionally biased toward basic and acidic residues; the sequence is RARERDAKESYG. Basic residues predominate over residues 74–85; the sequence is HKKGAGSRKGKA.

The protein belongs to the eukaryotic ribosomal protein eL19 family. Part of the 50S ribosomal subunit.

In terms of biological role, binds to the 23S rRNA. The sequence is that of Large ribosomal subunit protein eL19 from Halobacterium salinarum (strain ATCC 700922 / JCM 11081 / NRC-1) (Halobacterium halobium).